The following is a 91-amino-acid chain: Probable Fe(2+)-trafficking protein (91 aa).

Belongs to the Fe(2+)-trafficking protein family.

Functionally, could be a mediator in iron transactions between iron acquisition and iron-requiring processes, such as synthesis and/or repair of Fe-S clusters in biosynthetic enzymes. The polypeptide is Probable Fe(2+)-trafficking protein (Xanthomonas axonopodis pv. citri (strain 306)).